The primary structure comprises 735 residues: Transmembrane channel-like protein 7 (735 aa).

The Extracellular segment spans residues Met1–Leu164. Residues Val165 to Ile185 traverse the membrane as a helical segment. Residues Ser186–Gly233 are Cytoplasmic-facing. A helical membrane pass occupies residues Phe234 to Val254. The Extracellular portion of the chain corresponds to Leu255 to Asn258. A helical transmembrane segment spans residues Leu259–Ile279. Over Lys280–Ser355 the chain is Cytoplasmic. The chain crosses the membrane as a helical span at residues Leu356–Tyr376. Residues Arg377 to Tyr403 lie on the Extracellular side of the membrane. Asn385 carries N-linked (GlcNAc...) asparagine glycosylation. The chain crosses the membrane as a helical span at residues Leu404–Ile424. Residues Arg425–Arg436 lie on the Cytoplasmic side of the membrane. The helical transmembrane segment at Leu437 to Leu457 threads the bilayer. The Extracellular segment spans residues Trp458–Glu488. The helical transmembrane segment at Met489–Phe509 threads the bilayer. The Cytoplasmic portion of the chain corresponds to Pro510–Trp548. The helical transmembrane segment at Ile549–Phe569 threads the bilayer. The Extracellular segment spans residues Tyr570–Phe594. A helical membrane pass occupies residues Phe595–Ile615. At Ala616 to Trp634 the chain is on the cytoplasmic side. A helical transmembrane segment spans residues Ala635–Ile655. At Ala656–Glu658 the chain is on the extracellular side. A helical membrane pass occupies residues Ala659 to Ala679. Topologically, residues Gly680–Gly735 are cytoplasmic. Positions Ala710–Gly735 are disordered.

It belongs to the TMC family.

It localises to the membrane. In terms of biological role, probable component of an ion channel. The protein is Transmembrane channel-like protein 7 (Tmc7) of Gallus gallus (Chicken).